We begin with the raw amino-acid sequence, 65 residues long: pH-response transcription factor pacC/RIM101 (65 aa).

A C2H2-type 1 zinc finger spans residues 16–40 (LTCQWNSCRTTTVKRDHITSHIRVH). The C2H2-type 2; degenerate zinc-finger motif lies at 46–65 (HKCEFCGKSFKRPQDLKKHV).

The protein belongs to the pacC/RIM101 family.

Its subcellular location is the nucleus. Transcription factor that mediates regulation of both acid- and alkaline-expressed genes in response to ambient pH. At alkaline ambient pH, activates transcription of alkaline-expressed genes (including pac1 itself) and represses transcription of acid-expressed genes. The protein is pH-response transcription factor pacC/RIM101 (pac1) of Colletotrichum gloeosporioides (Anthracnose fungus).